A 251-amino-acid chain; its full sequence is Mycofactocin precursor peptide peptidase (251 aa).

Glu-38, His-40, Asp-49, His-128, and Glu-167 together coordinate a divalent metal cation.

This sequence belongs to the creatininase superfamily. In terms of assembly, homooctamer. The cofactor is Fe(2+). Requires Zn(2+) as cofactor.

The enzyme catalyses [mycofactocin precursor peptide]-C-terminal glycyl-N-{5-[(4-hydroxyphenyl)methyl]-4,4-dimethyl-2-oxopyrrolidin-3-yl}acetamide + H2O = [mycofactocin precursor peptide]-C-terminal glycine + 3-amino-5-[(4-hydroxyphenyl)methyl]-4,4-dimethyl-2-pyrrolidin-2-one. Its function is as follows. Peptidase involved in the biosynthesis of the enzyme cofactor mycofactocin (MFT). Catalyzes cleavage of the MftC-modified MftA peptide to liberate its final two residues, which consist of a cross-linked valine-decarboxylated tyrosine dipeptide (named 3-amino-5-[(4-hydroxyphenyl)methyl]-4,4-dimethyl-2-pyrrolidin-2-one or ADHP). The protein is Mycofactocin precursor peptide peptidase (mftE) of Mycobacterium tuberculosis (strain CDC 1551 / Oshkosh).